A 125-amino-acid chain; its full sequence is Putative superoxide reductase (125 aa).

Fe cation contacts are provided by E12, H14, H40, H46, C110, and H113.

It belongs to the desulfoferrodoxin family. The cofactor is Fe cation.

The enzyme catalyses reduced [rubredoxin] + superoxide + 2 H(+) = oxidized [rubredoxin] + H2O2. Functionally, uses electrons from reduced NADP, by way of rubredoxin and an oxidoreductase, to catalyze the reduction of superoxide to hydrogen peroxide. This chain is Putative superoxide reductase, found in Archaeoglobus fulgidus (strain ATCC 49558 / DSM 4304 / JCM 9628 / NBRC 100126 / VC-16).